Here is a 984-residue protein sequence, read N- to C-terminus: Translation initiation factor IF-2 (984 aa).

The disordered stretch occupies residues 32 to 402 (PAKNATSTLT…TQPQRAAKRK (371 aa)). Positions 89–123 (PAETEAQASPAQPEAKAAAPAAEAEEAPAAKPAPA) are enriched in low complexity. Basic and acidic residues predominate over residues 126 to 136 (RKAEARTEAPR). Low complexity-rich tracts occupy residues 154-172 (APET…SAAP) and 187-197 (AETTESAPAEP). The segment covering 198-220 (AAEKAPAEKRRYEVSMEPEKDSV) has biased composition (basic and acidic residues). Low complexity predominate over residues 255–270 (RPDPAAVQAQAAAAAQ). A compositionally biased stretch (basic and acidic residues) spans 271-283 (AREERAERPDRGP). Residues 308-334 (GRPAPRSGAPRPGGARPAAGFGQPAQA) show a composition bias toward low complexity. Residues 482–651 (PRPPVVTIMG…ALQAEVLELK (170 aa)) enclose the tr-type G domain. Residues 491 to 498 (GHVDHGKT) form a G1 region. Position 491–498 (491–498 (GHVDHGKT)) interacts with GTP. The tract at residues 516–520 (GITQH) is G2. A G3 region spans residues 537–540 (DTPG). GTP is bound by residues 537–541 (DTPGH) and 591–594 (NKID). Positions 591–594 (NKID) are G4. Residues 627 to 629 (SAK) are G5.

It belongs to the TRAFAC class translation factor GTPase superfamily. Classic translation factor GTPase family. IF-2 subfamily.

The protein localises to the cytoplasm. Functionally, one of the essential components for the initiation of protein synthesis. Protects formylmethionyl-tRNA from spontaneous hydrolysis and promotes its binding to the 30S ribosomal subunits. Also involved in the hydrolysis of GTP during the formation of the 70S ribosomal complex. This Oleidesulfovibrio alaskensis (strain ATCC BAA-1058 / DSM 17464 / G20) (Desulfovibrio alaskensis) protein is Translation initiation factor IF-2.